Consider the following 95-residue polypeptide: Beta-alanine degradation protein BauB (95 aa).

Residues 23-90 enclose the Cupin type-2 domain; that stretch reads WRFAPGAETG…NASAHEVVFV (68 aa).

Functionally, involved in the degradation of beta-alanine. The chain is Beta-alanine degradation protein BauB (bauB) from Pseudomonas aeruginosa (strain ATCC 15692 / DSM 22644 / CIP 104116 / JCM 14847 / LMG 12228 / 1C / PRS 101 / PAO1).